The chain runs to 819 residues: THO complex subunit 5B (819 aa).

A disordered region spans residues 285–332 (ARQQSRKDSGMSSNTESSRLEDDGPDDDDDGQRRRKRPKKLTSKEGSD).

This sequence belongs to the THOC5 family. In terms of assembly, component of the THO complex, which is composed of THO1, THO2, THO3, THO5, THO6 and THO7.

The protein resides in the nucleus. In terms of biological role, acts as a component of the THO subcomplex of the TREX complex which is thought to couple mRNA transcription, processing and nuclear export. The polypeptide is THO complex subunit 5B (THO5B) (Arabidopsis thaliana (Mouse-ear cress)).